The primary structure comprises 245 residues: 14-3-3 protein zeta/delta (245 aa).

Residue Met1 is modified to N-acetylmethionine. Lys3 bears the N6-acetyllysine mark. Ser58 is modified (phosphoserine; by PKA). Lys68 carries the post-translational modification N6-acetyllysine. Ser184, Ser207, and Ser210 each carry phosphoserine. At Thr232 the chain carries Phosphothreonine; by CK1.

It belongs to the 14-3-3 family. Homodimer. Heterodimerizes with YWHAE. Homo- and heterodimerization is inhibited by phosphorylation on Ser-58. Interacts with FOXO4, NOXA1, SSH1 and ARHGEF2. Interacts with CDK16 and with WEE1 (C-terminal). Interacts with MLF1 (phosphorylated form); the interaction retains it in the cytoplasm. Interacts with BSPRY. Interacts with Thr-phosphorylated ITGB2. Interacts with Pseudomonas aeruginosa exoS (unphosphorylated form). Interacts with BAX; the interaction occurs in the cytoplasm. Under stress conditions, MAPK8-mediated phosphorylation releases BAX to mitochondria. Interacts with phosphorylated RAF1; the interaction is inhibited when YWHAZ is phosphorylated on Thr-232. Interacts with TP53; the interaction enhances p53 transcriptional activity. The Ser-58 phosphorylated form inhibits this interaction and p53 transcriptional activity. Interacts with ABL1 (phosphorylated form); the interaction retains ABL1 in the cytoplasm. Interacts with PKA-phosphorylated AANAT; the interaction modulates AANAT enzymatic activity by increasing affinity for arylalkylamines and acetyl-CoA and protecting the enzyme from dephosphorylation and proteasomal degradation. It may also prevent thiol-dependent inactivation. Interacts with AKT1; the interaction phosphorylates YWHAZ and modulates dimerization. Interacts with GAB2. Interacts with SAMSN1. Interacts with BCL2L11 and TLK2. Interacts with the 'Thr-369' phosphorylated form of DAPK2. Interacts with PI4KB, TBC1D22A and TBC1D22B. Interacts with ZFP36L1 (via phosphorylated form); this interaction occurs in a p38 MAPK- and AKT-signaling pathways. Interacts with SLITRK1. Interacts with AK5, LDB1, MADD, PDE1A and SMARCB1. Interacts with ARHGEF7 and GIT1. Interacts with MEFV. Interacts with ADAM22 (via C-terminus). The delta, brain-specific form differs from the zeta form in being phosphorylated. Phosphorylation on Ser-184 by MAPK8; promotes dissociation of BAX and translocation of BAX to mitochondria. Phosphorylation on Thr-232; inhibits binding of RAF1. Phosphorylated on Ser-58 by PKA and protein kinase C delta type catalytic subunit in a sphingosine-dependent fashion. Phosphorylation on Ser-58 by PKA; disrupts homodimerization and heterodimerization with YHAE and TP53.

The protein resides in the cytoplasm. Its subcellular location is the melanosome. Adapter protein implicated in the regulation of a large spectrum of both general and specialized signaling pathways. Binds to a large number of partners, usually by recognition of a phosphoserine or phosphothreonine motif. Binding generally results in the modulation of the activity of the binding partner. Promotes cytosolic retention and inactivation of TFEB transcription factor by binding to phosphorylated TFEB. Induces ARHGEF7 activity on RAC1 as well as lamellipodia and membrane ruffle formation. In neurons, regulates spine maturation through the modulation of ARHGEF7 activity. The chain is 14-3-3 protein zeta/delta (Ywhaz) from Mus musculus (Mouse).